The following is a 259-amino-acid chain: Chloroplastic import inner membrane translocase subunit HP30-2 (259 aa).

4 helical membrane passes run 55–75, 108–124, 135–155, and 158–178; these read AVVT…MGTL, NFAA…CVMK, AVVA…GLQG, and MNAI…FKLG.

The protein belongs to the Tim17/Tim22/Tim23 family. Probable component of a protein-conducting channel made of HP30-1, HP30-2 and HP20 that mediates the import of transit sequence-less proteins into the chloroplastic inner membrane. Interacts with CEQORH.

It is found in the mitochondrion membrane. Its subcellular location is the plastid. It localises to the chloroplast inner membrane. Together with HP30-1 and HP20, triggers the import and insertion of transit sequence-less multi-pass transmembrane proteins (e.g. CEQORH) into the chloroplastic inner membrane. This Arabidopsis thaliana (Mouse-ear cress) protein is Chloroplastic import inner membrane translocase subunit HP30-2.